Consider the following 232-residue polypeptide: Ubiquitin carboxyl-terminal hydrolase UCHL3 (232 aa).

One can recognise a UCH catalytic domain in the interval 6–225 (IWTPLESNPD…LRFSALAVIP (220 aa)). The interaction with ubiquitin stretch occupies residues 10–14 (LESNP). C92 functions as the Nucleophile in the catalytic mechanism. The tract at residues 151-159 (QVENRDDIL) is crossover loop which restricts access of large ubiquitin adducts to the active site. An interaction with ubiquitin region spans residues 163–165 (THF). H164 functions as the Proton donor in the catalytic mechanism.

Belongs to the peptidase C12 family.

It catalyses the reaction Thiol-dependent hydrolysis of ester, thioester, amide, peptide and isopeptide bonds formed by the C-terminal Gly of ubiquitin (a 76-residue protein attached to proteins as an intracellular targeting signal).. In terms of biological role, thiol protease that recognizes and hydrolyzes a peptide bond at the C-terminal glycine of either ubiquitin or NEDD8. Essential for parasite blood stage survival. The protein is Ubiquitin carboxyl-terminal hydrolase UCHL3 of Plasmodium falciparum (isolate 3D7).